The primary structure comprises 516 residues: MNVFFMFSLLFLAALGSCAHDRNPLEECFRETDYEEFLEIAKNGLTATSNPKRVVIVGAGMAGLSAAYVLAGAGHQVTVLEASERVGGRVRTYRKKDWYANLGPMRLPTKHRIVREYIKKFDLKLNEFSQENENAWYFIKNIRKRVREVKNNPGLLEYPVKPSEEGKSAAQLYVESLRKVVEELRSTNCKYILDKYDTYSTKEYLLKEGNLSPGAVDMIGDLLNEDSGYYVSFIESLKHDDIFGYEKRFDEIVGGMDQLPTSMYEAIKEKVQVHFNARVIEIQQNDREATVTYQTSANEMSSVTADYVIVCTTSRAARRIKFEPPLPPKKAHALRSVHYRSGTKIFLTCTKKFWEDDGIHGGKSTTDLPSRFIYYPNHNFTSGVGVIIAYGIGDDANFFQALDFKDCADIVINDLSLIHELPKEDIQTFCHPSMIQRWSLDKYAMGGITTFTPYQFQHFSEALTAPFKRIYFAGEYTAQFHGWIDSTIKSGLTAARDVNRASENPSGIHLSNDNEF.

A signal peptide spans M1 to C18. The cysteines at positions 28 and 189 are disulfide-linked. FAD-binding positions include M61 to A62, E81 to A82, R89, and G103 to R106. Substrate contacts are provided by R106 and H239. FAD is bound at residue V279. A disulfide bridge connects residues C349 and C430. N379 is a glycosylation site (N-linked (GlcNAc...) asparagine). Y390 contributes to the substrate binding site. FAD contacts are provided by residues E475 and G482–T487. A substrate-binding site is contributed by G482–W483.

Belongs to the flavin monoamine oxidase family. FIG1 subfamily. In terms of assembly, homodimer; non-covalently linked. It depends on FAD as a cofactor. In terms of processing, N-glycosylated. In terms of tissue distribution, expressed by the venom gland.

Its subcellular location is the secreted. It catalyses the reaction an L-alpha-amino acid + O2 + H2O = a 2-oxocarboxylate + H2O2 + NH4(+). The catalysed reaction is L-leucine + O2 + H2O = 4-methyl-2-oxopentanoate + H2O2 + NH4(+). It carries out the reaction L-phenylalanine + O2 + H2O = 3-phenylpyruvate + H2O2 + NH4(+). The enzyme catalyses L-methionine + O2 + H2O = 4-methylsulfanyl-2-oxobutanoate + H2O2 + NH4(+). It catalyses the reaction L-arginine + O2 + H2O = 5-guanidino-2-oxopentanoate + H2O2 + NH4(+). Catalyzes an oxidative deamination of predominantly hydrophobic and aromatic L-amino acids, thus producing hydrogen peroxide that may contribute to the diverse toxic effects of this enzyme. Is active on L-Arg, L-Phe, L-Met, and L-Leu and is weakly active on L-Val. Exhibits diverse biological activities, such as hemorrhage, hemolysis, edema, apoptosis of vascular endothelial cells or tumor cell lines, antibacterial and antiparasitic activities, as well as regulation of platelet aggregation. Its effect on platelets is controversial, since it either induces aggregation or inhibits agonist-induced aggregation. These different effects are probably due to different experimental conditions. The protein is L-amino-acid oxidase of Crotalus adamanteus (Eastern diamondback rattlesnake).